The chain runs to 150 residues: Large ribosomal subunit protein bL9 (150 aa).

It belongs to the bacterial ribosomal protein bL9 family.

Binds to the 23S rRNA. This is Large ribosomal subunit protein bL9 from Vibrio campbellii (strain ATCC BAA-1116).